A 321-amino-acid polypeptide reads, in one-letter code: Mas-related G-protein coupled receptor member H (321 aa).

Residues 1–35 lie on the Extracellular side of the membrane; sequence MEPLAMTLYPLESTQPTRNKTPNETTWSSEHTDDH. A glycan (N-linked (GlcNAc...) asparagine) is linked at Asn-23. Residues 36 to 56 traverse the membrane as a helical segment; it reads TYFLVSLVICSLGLAGNGLLI. The Cytoplasmic portion of the chain corresponds to 57–71; the sequence is WFLIFCIKRKPFTIY. Residues 72–92 traverse the membrane as a helical segment; the sequence is ILHLAIADFMVLLCSSIMKLV. Topologically, residues 93 to 102 are extracellular; it reads NTFHIYNMTL. The N-linked (GlcNAc...) asparagine glycan is linked to Asn-99. A helical transmembrane segment spans residues 103–126; the sequence is ESYAILFMIFGYNTGLHLLTAISV. Over 127–147 the chain is Cytoplasmic; sequence ERCLSVLYPIWYQCQRPKHQS. Residues 148–168 form a helical membrane-spanning segment; it reads AVACMLLWALSVLVSGLENFF. At 169 to 188 the chain is on the extracellular side; sequence CILEVKPQFPECRYVYIFSC. A helical membrane pass occupies residues 189–209; sequence ILTFLVFVPLMIFSNLILFIQ. The Cytoplasmic segment spans residues 210 to 225; the sequence is VCCNLKPRQPTKLYVI. Residues 226 to 246 form a helical membrane-spanning segment; that stretch reads IMTTVILFLVFAMPMKVLLII. Position 247 (Gly-247) is a topological domain, extracellular. Residues 248–271 form a helical membrane-spanning segment; that stretch reads YYSSSLDDSVWDSLPYLNMLSTIN. Topologically, residues 272-320 are cytoplasmic; it reads CSINPIVYFVVGSLRRKRSRKSLKEALQKVFEEKPVVASRENVTQFSLP.

The protein belongs to the G-protein coupled receptor 1 family. Mas subfamily.

It is found in the cell membrane. In terms of biological role, orphan receptor. May regulate nociceptor function and/or development, including the sensation or modulation of pain. The sequence is that of Mas-related G-protein coupled receptor member H (Mrgprh) from Mus musculus (Mouse).